The following is a 157-amino-acid chain: Small ribosomal subunit protein uS7 (157 aa).

This sequence belongs to the universal ribosomal protein uS7 family. As to quaternary structure, part of the 30S ribosomal subunit. Contacts proteins S9 and S11.

In terms of biological role, one of the primary rRNA binding proteins, it binds directly to 16S rRNA where it nucleates assembly of the head domain of the 30S subunit. Is located at the subunit interface close to the decoding center, probably blocks exit of the E-site tRNA. This Psychrobacter cryohalolentis (strain ATCC BAA-1226 / DSM 17306 / VKM B-2378 / K5) protein is Small ribosomal subunit protein uS7.